The chain runs to 643 residues: Sodium/iodide cotransporter (643 aa).

The Extracellular portion of the chain corresponds to 1-14 (MEAVETGERPTFGA). A helical transmembrane segment spans residues 15-31 (WDYGVFALMLLVSTGIG). At 32–56 (LWVGLARGGQRSAEDFFTGGRRLAA) the chain is on the cytoplasmic side. Residues 57–80 (LPVGLSLSASFMSAVQVLGVPSEA) traverse the membrane as a discontinuously helical segment. S69, V71, and Q72 together coordinate Na(+). An iodide-binding site is contributed by V76. Topologically, residues 81 to 84 (YRYG) are extracellular. A helical transmembrane segment spans residues 85 to 105 (LKFLWMCLGQLLNSVLTALLF). Residue M90 participates in iodide binding. Over 106 to 130 (MPVFYRLGLTSTYEYLEMRFSRAVR) the chain is Cytoplasmic. The chain crosses the membrane as a helical span at residues 131-157 (LCGTLQYIVATMLYTGIVIYAPALILN). Y144 lines the Na(+) pocket. Residues 158–163 (QVTGLD) lie on the Extracellular side of the membrane. A helical transmembrane segment spans residues 164-181 (IWASLLSTGIICTFYTAV). Residues 182–189 (GGMKAVVW) lie on the Cytoplasmic side of the membrane. Residues 190 to 208 (TDVFQVVVMLSGFWVVLAR) form a helical membrane-spanning segment. Over 209–243 (GVMLVGGPRQVLTLAQNHSRINLMDFNPDPRSRYT) the chain is Extracellular. Residues 244–266 (FWTFVVGGTLVWLSMYGVNQAQV) traverse the membrane as a discontinuously helical segment. Position 255 (W255) interacts with iodide. M258 contacts Na(+). At 267–278 (QRYVACRTEKQA) the chain is on the cytoplasmic side. Residues 279 to 301 (KLALLINQVGLFLIVSSAACCGI) form a helical membrane-spanning segment. Residues 302-335 (VMFVFYTDCDPLLLGRISAPDQYMPLLVLDIFED) lie on the Extracellular side of the membrane. Residues 336–363 (LPGVPGLFLACAYSGTLSTASTSINAMA) form a helical membrane-spanning segment. The Cytoplasmic portion of the chain corresponds to 364-386 (AVTVEDLIKPRLRSLAPRKLVII). The helical transmembrane segment at 387-408 (SKGLSLIYGSACLTVAALSSLL) threads the bilayer. Topologically, residues 409–411 (GGG) are extracellular. Residues 412 to 437 (VLQGSFTVMGVISGPLLGAFILGMFL) form a helical membrane-spanning segment. L413 provides a ligand contact to iodide. Na(+) contacts are provided by S416 and F417. Position 417 (F417) interacts with iodide. At 438–441 (PACN) the chain is on the cytoplasmic side. Residues 442–465 (TPGVLAGLGAGLALSLWVALGATL) form a helical membrane-spanning segment. The Extracellular segment spans residues 466-525 (YPPSEQTMRVLPSSAARCVALSVNASGLLDPALLPANDSSRAPSSGMDASRPALADSFYA). 2 N-linked (GlcNAc...) asparagine glycosylation sites follow: N489 and N502. Residues 526–550 (ISYLYYGALGTLTTVLCGALISCLT) form a helical membrane-spanning segment. Residues 551-643 (GPTKRSTLAP…GGRDQQETNL (93 aa)) lie on the Cytoplasmic side of the membrane. A Phosphoserine; by PKA modification is found at S556. The segment at 623–643 (AGSWTPCVGHDGGRDQQETNL) is disordered. Positions 633–643 (DGGRDQQETNL) are enriched in basic and acidic residues.

It belongs to the sodium:solute symporter (SSF) (TC 2.A.21) family. As to quaternary structure, monomer. Post-translationally, glycosylated. As to expression, expression is primarily in thyroid tissue, but also to a lower extent in mammary gland and ovary. Expression is reduced in tumors.

Its subcellular location is the cell membrane. It localises to the cytoplasm. The enzyme catalyses iodide(out) + 2 Na(+)(out) = iodide(in) + 2 Na(+)(in). The catalysed reaction is chlorate(out) + 2 Na(+)(out) = chlorate(in) + 2 Na(+)(in). It carries out the reaction thiocyanate(out) + 2 Na(+)(out) = thiocyanate(in) + 2 Na(+)(in). It catalyses the reaction nitrate(out) + 2 Na(+)(out) = nitrate(in) + 2 Na(+)(in). The enzyme catalyses selenocyanate(out) + 2 Na(+)(out) = selenocyanate(in) + 2 Na(+)(in). Its activity is regulated as follows. Dysidenin and perchlorate inhibit iodide transport activity. Oxyanions inhibit iodide transport activity by blocking the binding sites for iodide and one of the sodium ions. Functionally, sodium:iodide symporter that mediates the transport of iodide into the thyroid gland. Can also mediate the transport of chlorate, thiocynate, nitrate and selenocynate. In Homo sapiens (Human), this protein is Sodium/iodide cotransporter (SLC5A5).